We begin with the raw amino-acid sequence, 699 residues long: Elongation factor G (699 aa).

One can recognise a tr-type G domain in the interval 8-290; sequence NRYRNIGICA…AVIEFLPAPD (283 aa). GTP contacts are provided by residues 17 to 24, 88 to 92, and 142 to 145; these read AHVDAGKT, DTPGH, and NKMD.

This sequence belongs to the TRAFAC class translation factor GTPase superfamily. Classic translation factor GTPase family. EF-G/EF-2 subfamily.

The protein localises to the cytoplasm. Functionally, catalyzes the GTP-dependent ribosomal translocation step during translation elongation. During this step, the ribosome changes from the pre-translocational (PRE) to the post-translocational (POST) state as the newly formed A-site-bound peptidyl-tRNA and P-site-bound deacylated tRNA move to the P and E sites, respectively. Catalyzes the coordinated movement of the two tRNA molecules, the mRNA and conformational changes in the ribosome. This chain is Elongation factor G, found in Alcanivorax borkumensis (strain ATCC 700651 / DSM 11573 / NCIMB 13689 / SK2).